The primary structure comprises 357 residues: MPARKYKIHVPCTSANIGPGFDVCGIALSLSLSLVVTIPSVSSGAEPLPKIIYTGLDSDNVPLSPYKNLLTRVALYVLRANGITTFPPGVTIEARNEIPFGRGLGSSGAAVIAGVLLGDLLGNLSLPKSRLLDFALMVERHPDNVTAALMGGFVGSYLRELSPEDMSAASIPLAEVLPEYPPDAGPDWGKSPPQPPHGIGHFVRFGWAKEIKAIAVSPRFELATAKARGVLPESYSRKDMIFNLQRLAVLTTALARSPPDPDLIYDAMGDRVHQPYRMTLIPGLPKILSTLTPTSHPGLLGICLSGAGPTILALATHNFEAIANEIERIFGDEQVLVDHKVLNIDEKGSWVEDITEA.

The protein belongs to the GHMP kinase family. Homoserine kinase subfamily.

It catalyses the reaction L-homoserine + ATP = O-phospho-L-homoserine + ADP + H(+). It participates in amino-acid biosynthesis; L-threonine biosynthesis; L-threonine from L-aspartate: step 4/5. Its function is as follows. Commits homoserine to the threonine biosynthesis pathway by catalyzing its O-phosphorylation. The chain is Homoserine kinase from Cryptococcus neoformans var. grubii serotype A (strain H99 / ATCC 208821 / CBS 10515 / FGSC 9487) (Filobasidiella neoformans var. grubii).